We begin with the raw amino-acid sequence, 204 residues long: MILSDKDIIDYVTSKRIIIKPFNKDFVGPCSYDVTLGDEFIIYDDEVYDLSKELNYKRIKIKNSILVCPLNYNLTEEKINYFKEKYNVDYVVEGGVLGTTNEYIELPNDISAQYQGRSSLGRVFLTSHQTAGWIDAGFKGKITLEIVAFDKPVILYKNQRIGQLIFSKLLSPADVGYSERKTSKYAYQKSVMPSLIHLDNHKKD.

DCTP contacts are provided by residues 117 to 122 (RSSLGR), His128, Gly132, Asp135, 143 to 145 (TLE), Gln163, Tyr177, Lys184, and Gln188. Glu145 functions as the Proton donor/acceptor in the catalytic mechanism.

In terms of assembly, homotrimer. Two trimers assemble into a hexamer by stacking on top of each other. The cofactor is Mg(2+).

The enzyme catalyses dCTP + 2 H2O = dUMP + NH4(+) + diphosphate. It participates in pyrimidine metabolism; dUMP biosynthesis; dUMP from dCTP: step 1/1. Its activity is regulated as follows. Inhibited by dTTP. Its function is as follows. Bifunctional enzyme that catalyzes both the deamination of dCTP to dUTP and the hydrolysis of dUTP to dUMP without releasing the toxic dUTP intermediate. It also acts as a dUTP diphosphatase with a lower affinity for dUTP than for dCTP. This chain is dCTP deaminase, dUMP-forming, found in Methanocaldococcus jannaschii (strain ATCC 43067 / DSM 2661 / JAL-1 / JCM 10045 / NBRC 100440) (Methanococcus jannaschii).